The primary structure comprises 410 residues: Argininosuccinate synthase (410 aa).

ATP-binding positions include 13 to 21 and alanine 40; that span reads AYSGGLDTS. Tyrosine 91 and serine 96 together coordinate L-citrulline. Glycine 121 provides a ligand contact to ATP. Positions 123, 127, and 128 each coordinate L-aspartate. Residue asparagine 127 coordinates L-citrulline. Arginine 131, serine 182, serine 191, glutamate 267, and tyrosine 279 together coordinate L-citrulline.

It belongs to the argininosuccinate synthase family. Type 1 subfamily. Homotetramer.

The protein resides in the cytoplasm. It catalyses the reaction L-citrulline + L-aspartate + ATP = 2-(N(omega)-L-arginino)succinate + AMP + diphosphate + H(+). It participates in amino-acid biosynthesis; L-arginine biosynthesis; L-arginine from L-ornithine and carbamoyl phosphate: step 2/3. This chain is Argininosuccinate synthase, found in Gluconobacter oxydans (strain 621H) (Gluconobacter suboxydans).